Reading from the N-terminus, the 733-residue chain is Cyclic nucleotide-gated channel (733 aa).

Disordered stretches follow at residues 1-33 (MSTA…PTAS) and 67-95 (PNGN…IEVP). Topologically, residues 1–125 (MSTAEPAPDP…PSTDNFYYWT (125 aa)) are cytoplasmic. The segment covering 12-25 (NPSTSGLAPTTNGI) has biased composition (polar residues). The chain crosses the membrane as a helical span at residues 126 to 148 (CVVTVAYIYNLLFVIARQVFNDL). Topologically, residues 149–197 (IGPSSQSLCRFYNGTLNSTTQVECTYNMLTNMKEMPTYSQYPDLGWSKY) are extracellular. Residues 198-217 (WHFRMLWVFFDLLMDCVYLI) form a helical membrane-spanning segment. Residues 218 to 251 (DTFLNYRMGYMDQGLVVREAEKVTKAYWQSKQYR) lie on the Cytoplasmic side of the membrane. Residues 252 to 265 (IDGISLIPLDYILG) traverse the membrane as a helical segment. Over 266–276 (WPIPYINWRGL) the chain is Extracellular. Residues 277–287 (PILRLNRLIRY) traverse the membrane as a helical segment. The Cytoplasmic segment spans residues 288 to 308 (KRVRNCLERTETRSSMPNAFR). Residues 309 to 331 (VVVVVWYIVIIIHWNACLYFWIS) traverse the membrane as a helical segment. Over 332-362 (EWIGLGTDAWVYGHLNKQSLPDDITDTLLRR) the chain is Extracellular. The next 2 membrane-spanning stretches (helical) occupy residues 363–385 (YVYS…SPVR) and 386–411 (NIEY…GNVG). The interval 376–379 (TIGE) is selectivity filter. A Na(+)-binding site is contributed by Glu379. The Cytoplasmic segment spans residues 412–733 (SMISNMSAAR…TGTESESLLK (322 aa)). The interval 419-496 (AARTEFQNKM…TLRKVRIFQD (78 aa)) is C-linker. The interval 493 to 607 (IFQDCEAGLL…ALREYPDARK (115 aa)) is cyclic nucleotide-binding domain. Gly559 serves as a coordination point for 3',5'-cyclic GMP. Glu560 contacts 3',5'-cyclic AMP. Ser562, Arg575, Thr576, Lys619, and Asp620 together coordinate 3',5'-cyclic GMP. 3',5'-cyclic AMP is bound at residue Arg575. Positions 694–733 (SIDGGDISTDGVDERVRPPRLRQTKTIDLPTGTESESLLK) are disordered.

It belongs to the cyclic nucleotide-gated cation channel (TC 1.A.1.5) family. Homotetramer. As to expression, expressed at the sensory endings of thermosensory, gustatory, and olfactory neurons.

It is found in the cell membrane. The protein resides in the cell projection. Its subcellular location is the cilium. The enzyme catalyses Ca(2+)(in) = Ca(2+)(out). The catalysed reaction is Na(+)(in) = Na(+)(out). It carries out the reaction K(+)(in) = K(+)(out). Functionally, pore-forming subunit of the cyclic nucleotide-gated channel. Required for normal thermosensation and chemosensation sensory behavior. Required, downstream of receptor-type guanylate cyclase gcy-9, for CO2-mediated responses in BAG neurons. Required, downstream of receptor-type guanylate cyclase gcy-14, for alkaline pH-mediated responses in ASE-left (ASEL) neurons. Involved in the development of ASJ sensory neuron axon during late larval stages and in the maintenance of normal axon morphology in the adult. Regulates dauer formation. Required for the calcium flux to the cytoplasm in the ASJ sensory neurons upon the onset and removal of a nitric oxide (NO) stimulus, thereby promoting the ASJ-mediated behavioral avoidance response to NO-producing organisms like P.aeruginosa. In ASI and ASJ sensory neurons, controls behavioral response to P.aeruginosa by up-regulating the transcription of daf-7, a member of the TGF-beta family. In AWB and AWC sensory neurons, mediates the recognition of food odors which subsequently allows for the detection of preferred food sources. In AWC neurons, acts to promote expression of srsx-3, a member of the GPCR family. Binding to cGMP results in conformational changes at the hydrophobic gate that converts the protein from an inactive closed state to an active open state. This chain is Cyclic nucleotide-gated channel (tax-4), found in Caenorhabditis elegans.